The chain runs to 278 residues: Tryptophan synthase alpha chain (278 aa).

Active-site proton acceptor residues include glutamate 50 and aspartate 61.

The protein belongs to the TrpA family. Tetramer of two alpha and two beta chains.

The catalysed reaction is (1S,2R)-1-C-(indol-3-yl)glycerol 3-phosphate + L-serine = D-glyceraldehyde 3-phosphate + L-tryptophan + H2O. Its pathway is amino-acid biosynthesis; L-tryptophan biosynthesis; L-tryptophan from chorismate: step 5/5. Its function is as follows. The alpha subunit is responsible for the aldol cleavage of indoleglycerol phosphate to indole and glyceraldehyde 3-phosphate. This Afipia carboxidovorans (strain ATCC 49405 / DSM 1227 / KCTC 32145 / OM5) (Oligotropha carboxidovorans) protein is Tryptophan synthase alpha chain.